The primary structure comprises 950 residues: Oxysterol-binding protein-related protein 1 (950 aa).

The interval 1–237 is interaction with RAB7A; sequence MNTEAEQQLL…NKVVHKALKR (237 aa). ANK repeat units follow at residues 47–76, 80–109, and 175–204; these read LGWT…KVNM, MGDT…DSTV, and LGNT…DPSL. The region spanning 235–334 is the PH domain; the sequence is LKRYEGPLWK…WLEAIEEHSA (100 aa). Residues 430 to 463 adopt a coiled-coil conformation; that stretch reads NFKLEQEQEKNKILSEALETLATEHHELERSLVE. The short motif at 469–483 is the FFAT element; it reads SILSEEEFYDALSGS. Phosphoserine is present on Ser-499. Disordered regions lie at residues 502–530 and 795–821; these read ENEV…SNGI and KKNT…VPDS. Residues 879–913 adopt a coiled-coil conformation; it reads RAMENGEIDLASEEKKRLEEKQRAARKNRSKSEED.

Belongs to the OSBP family. Interacts (via FFAT motif) with VAPA and VAPB. Interacts with the GTP-bound form of RAB7A. Interacts with OAS1B. Interacts (via FFAT motif) with MOSPD2 (via MSP domain). As to expression, ubiquitous.

The protein resides in the late endosome. In terms of biological role, binds phospholipids; exhibits strong binding to phosphatidic acid and weak binding to phosphatidylinositol 3-phosphate. Stabilizes GTP-bound RAB7A on late endosomes/lysosomes and alters functional properties of late endocytic compartments via its interaction with RAB7A. Binds 25-hydroxycholesterol and cholesterol. The sequence is that of Oxysterol-binding protein-related protein 1 from Mus musculus (Mouse).